The sequence spans 84 residues: Putative membrane protein insertion efficiency factor (84 aa).

It belongs to the UPF0161 family.

Its subcellular location is the cell inner membrane. Could be involved in insertion of integral membrane proteins into the membrane. The chain is Putative membrane protein insertion efficiency factor from Shewanella frigidimarina (strain NCIMB 400).